The chain runs to 276 residues: Protein G1 (276 aa).

Disordered regions lie at residues 1–30 and 178–213; these read MSSS…SQKR and SYHK…ATAP. Basic and acidic residues predominate over residues 21–30; it reads RPSRYESQKR. The ALOG domain occupies 24-183; that stretch reads RYESQKRRDW…ARGISYHKKK (160 aa). The segment covering 178 to 187 has biased composition (basic residues); the sequence is SYHKKKKRRG. A Nuclear localization signal motif is present at residues 181–185; that stretch reads KKKKR. Positions 189–202 are enriched in gly residues; sequence NMNGARGGGGGGAR. The span at 203–213 shows a compositional bias: low complexity; the sequence is AGVNDGDATAP.

Belongs to the plant homeotic and developmental regulators ALOG protein family. In terms of tissue distribution, expressed at the empty glumes of immature spikelets, which are lemmas of the sterile florets located at the lateral side of the spikelet, throughout their development.

It is found in the nucleus. Functionally, probable transcription regulator that acts as a developmental regulator by promoting cell growth in response to light. Transcription regulator that restrains empty glumes growth, lemmas of the sterile florets located at the lateral side of the rice spikelet, to maintain their small size, probably by repressing lemma identity via transcription regulation. In Oryza sativa subsp. japonica (Rice), this protein is Protein G1 (G1).